The following is a 328-amino-acid chain: Beta-ketoacyl-[acyl-carrier-protein] synthase III (328 aa).

Catalysis depends on residues cysteine 122 and histidine 255. The interval 256-260 (QANIR) is ACP-binding. Asparagine 285 is an active-site residue.

Belongs to the thiolase-like superfamily. FabH family. Homodimer.

The protein localises to the cytoplasm. The enzyme catalyses malonyl-[ACP] + acetyl-CoA + H(+) = 3-oxobutanoyl-[ACP] + CO2 + CoA. Its pathway is lipid metabolism; fatty acid biosynthesis. Functionally, catalyzes the condensation reaction of fatty acid synthesis by the addition to an acyl acceptor of two carbons from malonyl-ACP. Catalyzes the first condensation reaction which initiates fatty acid synthesis and may therefore play a role in governing the total rate of fatty acid production. Possesses both acetoacetyl-ACP synthase and acetyl transacylase activities. Its substrate specificity determines the biosynthesis of branched-chain and/or straight-chain of fatty acids. In Polynucleobacter asymbioticus (strain DSM 18221 / CIP 109841 / QLW-P1DMWA-1) (Polynucleobacter necessarius subsp. asymbioticus), this protein is Beta-ketoacyl-[acyl-carrier-protein] synthase III.